The sequence spans 358 residues: UDP-N-acetylglucosamine--N-acetylmuramyl-(pentapeptide) pyrophosphoryl-undecaprenol N-acetylglucosamine transferase (358 aa).

Residues 11–13, Asn-120, Arg-161, Ser-188, and Gln-282 contribute to the UDP-N-acetyl-alpha-D-glucosamine site; that span reads TGG.

It belongs to the glycosyltransferase 28 family. MurG subfamily.

Its subcellular location is the cell inner membrane. The catalysed reaction is di-trans,octa-cis-undecaprenyl diphospho-N-acetyl-alpha-D-muramoyl-L-alanyl-D-glutamyl-meso-2,6-diaminopimeloyl-D-alanyl-D-alanine + UDP-N-acetyl-alpha-D-glucosamine = di-trans,octa-cis-undecaprenyl diphospho-[N-acetyl-alpha-D-glucosaminyl-(1-&gt;4)]-N-acetyl-alpha-D-muramoyl-L-alanyl-D-glutamyl-meso-2,6-diaminopimeloyl-D-alanyl-D-alanine + UDP + H(+). It functions in the pathway cell wall biogenesis; peptidoglycan biosynthesis. Functionally, cell wall formation. Catalyzes the transfer of a GlcNAc subunit on undecaprenyl-pyrophosphoryl-MurNAc-pentapeptide (lipid intermediate I) to form undecaprenyl-pyrophosphoryl-MurNAc-(pentapeptide)GlcNAc (lipid intermediate II). The sequence is that of UDP-N-acetylglucosamine--N-acetylmuramyl-(pentapeptide) pyrophosphoryl-undecaprenol N-acetylglucosamine transferase from Synechococcus sp. (strain WH7803).